A 97-amino-acid polypeptide reads, in one-letter code: Putative pterin-4-alpha-carbinolamine dehydratase (97 aa).

The protein belongs to the pterin-4-alpha-carbinolamine dehydratase family.

It carries out the reaction (4aS,6R)-4a-hydroxy-L-erythro-5,6,7,8-tetrahydrobiopterin = (6R)-L-erythro-6,7-dihydrobiopterin + H2O. This Ruegeria pomeroyi (strain ATCC 700808 / DSM 15171 / DSS-3) (Silicibacter pomeroyi) protein is Putative pterin-4-alpha-carbinolamine dehydratase.